A 402-amino-acid chain; its full sequence is MSRVSQARSLGKYFLLVDNMLVVLGFFVVFPLISIRFVDQMGWAALMVGIALGLRQLVQQGLGIFGGAIADRFGAKPMIVTGMLMRAGGFAAMAVAHEPWVLWLSCILSGLGGTLFDPPRAALVVKLVRPHQRGRFFSLLMMQDSAGAVIGALLGSWLLQYDFRLVCSAGAALFIACAAFNAWYLPAWKLSTVKTPVREGLGRVLRDKRFVTYVLTLTGYYMLAVQVMLMLPIMVNDIAGSPAAVKWMYAIEATISLTLLYPIARWSEKRYRLEHRLMAGLLVMTLAMLPIGMTSSLQQLFTLICLFYIGSIIAEPARETLGASLADARARGSYMGFSRLGLAFGGALGYAGGGWLFDAGKAVGQPELPWLMLGAIGFITFLALWWQFSPKRSASGMLEPRT.

11 helical membrane passes run 13 to 33, 34 to 54, 99 to 116, 139 to 159, 165 to 185, 214 to 234, 243 to 263, 277 to 297, 300 to 320, 340 to 360, and 368 to 388; these read YFLL…FPLI, SIRF…ALGL, PWVL…GTLF, LLMM…SWLL, LVCS…AWYL, VLTL…LPIM, AAVK…LYPI, LMAG…TSSL, LFTL…ARET, LGLA…FDAG, and LPWL…WWQF.

The protein belongs to the major facilitator superfamily. DHA1 family. MdtH (TC 2.A.1.2.21) subfamily.

It is found in the cell inner membrane. The sequence is that of Multidrug resistance protein MdtH from Klebsiella pneumoniae (strain 342).